Consider the following 439-residue polypeptide: tRNA-2-methylthio-N(6)-dimethylallyladenosine synthase (439 aa).

In terms of domain architecture, MTTase N-terminal spans 5–121; the sequence is KKLFIKTYGC…LPELEAKTRA (117 aa). Positions 14, 50, 84, 159, 163, and 166 each coordinate [4Fe-4S] cluster. One can recognise a Radical SAM core domain in the interval 145 to 378; it reads AKRGPTAFLT…ITRHQREIQD (234 aa). Residues 378–439 form the TRAM domain; sequence DGMVGREVSV…GANSLAGELA (62 aa).

Belongs to the methylthiotransferase family. MiaB subfamily. As to quaternary structure, monomer. Requires [4Fe-4S] cluster as cofactor.

Its subcellular location is the cytoplasm. The enzyme catalyses N(6)-dimethylallyladenosine(37) in tRNA + (sulfur carrier)-SH + AH2 + 2 S-adenosyl-L-methionine = 2-methylsulfanyl-N(6)-dimethylallyladenosine(37) in tRNA + (sulfur carrier)-H + 5'-deoxyadenosine + L-methionine + A + S-adenosyl-L-homocysteine + 2 H(+). In terms of biological role, catalyzes the methylthiolation of N6-(dimethylallyl)adenosine (i(6)A), leading to the formation of 2-methylthio-N6-(dimethylallyl)adenosine (ms(2)i(6)A) at position 37 in tRNAs that read codons beginning with uridine. This is tRNA-2-methylthio-N(6)-dimethylallyladenosine synthase from Ruegeria pomeroyi (strain ATCC 700808 / DSM 15171 / DSS-3) (Silicibacter pomeroyi).